The following is a 507-amino-acid chain: Cytochrome P450 3A28 (507 aa).

Cys442 provides a ligand contact to heme.

Belongs to the cytochrome P450 family. Requires heme as cofactor.

The protein localises to the endoplasmic reticulum membrane. It localises to the microsome membrane. It catalyses the reaction an organic molecule + reduced [NADPH--hemoprotein reductase] + O2 = an alcohol + oxidized [NADPH--hemoprotein reductase] + H2O + H(+). Cytochromes P450 are a group of heme-thiolate monooxygenases. In liver microsomes, this enzyme is involved in an NADPH-dependent electron transport pathway. It oxidizes a variety of structurally unrelated compounds, including steroids, fatty acids, and xenobiotics. This Bos taurus (Bovine) protein is Cytochrome P450 3A28 (CYP3A28).